The primary structure comprises 34 residues: Phalloidin proprotein (34 aa).

Residues 1–10 (MSDINTTCLP) constitute a propeptide that is removed on maturation. A cross-link (cyclopeptide (Ala-Pro)) is located at residues 11–17 (AWLATCP). The 2'-cysteinyl-6'-hydroxytryptophan sulfoxide (Trp-Cys) cross-link spans 12–16 (WLATC). Residues 18 to 34 (CTGDDVNPTLTCGESLC) constitute a propeptide that is removed on maturation.

The protein belongs to the MSDIN fungal toxin family. In terms of processing, processed by the macrocyclase-peptidase enzyme POPB to yield a toxic cyclic heptapeptide. POPB first removes 10 residues from the N-terminus. Conformational trapping of the remaining peptide forces the enzyme to release this intermediate rather than proceed to macrocyclization. The enzyme rebinds the remaining peptide in a different conformation and catalyzes macrocyclization of the N-terminal 7 residues.

Its function is as follows. Toxin that belongs to the bicyclic heptapeptides called phallotoxins. Although structurally related to amatoxins, phallotoxins have a different mode of action, which is the stabilization of F-actin. Phallotoxins are poisonous when administered parenterally, but not orally because of poor absorption. The chain is Phalloidin proprotein from Amanita phalloides (Death cap).